Consider the following 115-residue polypeptide: Skin calcitonin gene-related peptide (115 aa).

The first 25 residues, 1-25 (MVLLKISSLLAVLGLLVCQMYSSQA), serve as a signal peptide directing secretion. Residues 26–69 (APARRALEPLPDRVTEAHRLLRALIRELTAEDMEASSSGAAHKR) constitute a propeptide, removed in mature form by a carboxypeptidase. Cys-71 and Cys-76 are disulfide-bonded. Residue Phe-106 is modified to Phenylalanine amide. The propeptide at 107-115 (GRRRRSLHV) is removed in mature form by an endoprotease.

As to expression, skin, intestine and brain.

The protein resides in the secreted. Functionally, CGRP induces vasodilation. It dilates a variety of vessels including the coronary, cerebral and systemic vasculature. Its abundance in the CNS also points toward a neurotransmitter or neuromodulator role. The sequence is that of Skin calcitonin gene-related peptide from Phyllomedusa bicolor (Two-colored leaf frog).